The chain runs to 513 residues: Histidine ammonia-lyase (513 aa).

The 5-imidazolinone (Ala-Gly) cross-link spans 142-144 (ASG). The residue at position 143 (Ser143) is a 2,3-didehydroalanine (Ser).

This sequence belongs to the PAL/histidase family. In terms of processing, contains an active site 4-methylidene-imidazol-5-one (MIO), which is formed autocatalytically by cyclization and dehydration of residues Ala-Ser-Gly.

Its subcellular location is the cytoplasm. It catalyses the reaction L-histidine = trans-urocanate + NH4(+). It functions in the pathway amino-acid degradation; L-histidine degradation into L-glutamate; N-formimidoyl-L-glutamate from L-histidine: step 1/3. The sequence is that of Histidine ammonia-lyase from Hyphomonas neptunium (strain ATCC 15444).